The primary structure comprises 274 residues: Large ribosomal subunit protein uL2 (274 aa).

A disordered region spans residues 224 to 274 (VAMNPVDHPHGGGEGRTSGGRHPVTPWGIPTKGYKTRRNKRSNKLIVQKRK). Residues 257 to 274 (YKTRRNKRSNKLIVQKRK) are compositionally biased toward basic residues.

Belongs to the universal ribosomal protein uL2 family. In terms of assembly, part of the 50S ribosomal subunit. Forms a bridge to the 30S subunit in the 70S ribosome.

One of the primary rRNA binding proteins. Required for association of the 30S and 50S subunits to form the 70S ribosome, for tRNA binding and peptide bond formation. It has been suggested to have peptidyltransferase activity; this is somewhat controversial. Makes several contacts with the 16S rRNA in the 70S ribosome. This chain is Large ribosomal subunit protein uL2, found in Francisella tularensis subsp. mediasiatica (strain FSC147).